We begin with the raw amino-acid sequence, 236 residues long: Carboxymethylenebutenolidase (236 aa).

Catalysis depends on residues Cys-123, Asp-171, and His-202.

Belongs to the dienelactone hydrolase family. As to quaternary structure, monomer.

It carries out the reaction 2-(5-oxo-2,5-dihydrofuran-2-ylidene)acetate + H2O = 4-oxohex-2-enedioate + H(+). Its pathway is aromatic compound metabolism; 3-chlorocatechol degradation. In terms of biological role, ring cleavage of cyclic ester dienelactone to produce maleylacetate. This Pseudomonas knackmussii (strain DSM 6978 / CCUG 54928 / LMG 23759 / B13) protein is Carboxymethylenebutenolidase (clcD).